The sequence spans 312 residues: Ribosomal protein L11 methyltransferase (312 aa).

Residues Thr163, Gly184, Asp206, and Asn248 each coordinate S-adenosyl-L-methionine.

Belongs to the methyltransferase superfamily. PrmA family.

It localises to the cytoplasm. The catalysed reaction is L-lysyl-[protein] + 3 S-adenosyl-L-methionine = N(6),N(6),N(6)-trimethyl-L-lysyl-[protein] + 3 S-adenosyl-L-homocysteine + 3 H(+). Its function is as follows. Methylates ribosomal protein L11. The sequence is that of Ribosomal protein L11 methyltransferase from Clostridium botulinum (strain Loch Maree / Type A3).